The following is a 453-amino-acid chain: Tol-Pal system protein TolB (453 aa).

The N-terminal stretch at 1–34 (MYLIIKKTHKLPHWLQKVSLSIMLIIFLWKPALL) is a signal peptide.

This sequence belongs to the TolB family. The Tol-Pal system is composed of five core proteins: the inner membrane proteins TolA, TolQ and TolR, the periplasmic protein TolB and the outer membrane protein Pal. They form a network linking the inner and outer membranes and the peptidoglycan layer.

Its subcellular location is the periplasm. Its function is as follows. Part of the Tol-Pal system, which plays a role in outer membrane invagination during cell division and is important for maintaining outer membrane integrity. TolB occupies a key intermediary position in the Tol-Pal system because it communicates directly with both membrane-embedded components, Pal in the outer membrane and TolA in the inner membrane. The polypeptide is Tol-Pal system protein TolB (Blochmanniella pennsylvanica (strain BPEN)).